We begin with the raw amino-acid sequence, 477 residues long: PEP-dependent dihydroxyacetone kinase, phosphoryl donor subunit DhaM (477 aa).

The 135-residue stretch at 1–135 (MIGLIIVSHS…QALQAKQQQL (135 aa)) folds into the PTS EIIA type-4 domain. His9 (tele-phosphohistidine intermediate) is an active-site residue. The region spanning 156–243 (ALTTQWVVKN…QLAQHNFGDN (88 aa)) is the HPr domain. The Pros-phosphohistidine intermediate role is filled by His170. Residues 269 to 477 (HAPNTELCIS…IETRSLIVAS (209 aa)) form a PTS EI-like, N-terminal part region. His435 (tele-phosphohistidine intermediate) is an active-site residue.

The protein belongs to the PEP-utilizing enzyme family. Homodimer. The dihydroxyacetone kinase complex is composed of a homodimer of DhaM, a homodimer of DhaK and the subunit DhaL.

It catalyses the reaction dihydroxyacetone + phosphoenolpyruvate = dihydroxyacetone phosphate + pyruvate. Its function is as follows. Component of the dihydroxyacetone kinase complex, which is responsible for the phosphoenolpyruvate (PEP)-dependent phosphorylation of dihydroxyacetone. DhaM serves as the phosphoryl donor. Is phosphorylated by phosphoenolpyruvate in an EI- and HPr-dependent reaction, and a phosphorelay system on histidine residues finally leads to phosphoryl transfer to DhaL and dihydroxyacetone. The chain is PEP-dependent dihydroxyacetone kinase, phosphoryl donor subunit DhaM from Providencia stuartii (strain MRSN 2154).